Reading from the N-terminus, the 172-residue chain is EPLLDSEGELVRNGGTYYLLPDRWALGGGIEAAATGTETCPLTVVRSPNEVSVGEPLRISSQLRSGFIPDYSVVRIGFANPPKCAPSPWWTVVEDQPQQPSVKLSELKSTKFDYLFKFEKVTSKFSSYKLKYCAKRDTCKDIGIYRDQKGYERLVVTDENPLVVIFKKVESS.

Intrachain disulfides connect Cys40–Cys84 and Cys133–Cys139.

The protein belongs to the protease inhibitor I3 (leguminous Kunitz-type inhibitor) family.

Its function is as follows. WTI-1B inhibits trypsin stoichiometrically. In Psophocarpus tetragonolobus (Winged bean), this protein is Trypsin inhibitor 1A.